Reading from the N-terminus, the 160-residue chain is 6,7-dimethyl-8-ribityllumazine synthase (160 aa).

5-amino-6-(D-ribitylamino)uracil is bound by residues Phe23, 61–63, and 85–87; these read SFE and AVI. A (2S)-2-hydroxy-3-oxobutyl phosphate-binding site is contributed by 90–91; sequence DT. His93 acts as the Proton donor in catalysis. Residue Phe118 coordinates 5-amino-6-(D-ribitylamino)uracil. Position 132 (Arg132) interacts with (2S)-2-hydroxy-3-oxobutyl phosphate.

It belongs to the DMRL synthase family.

It carries out the reaction (2S)-2-hydroxy-3-oxobutyl phosphate + 5-amino-6-(D-ribitylamino)uracil = 6,7-dimethyl-8-(1-D-ribityl)lumazine + phosphate + 2 H2O + H(+). Its pathway is cofactor biosynthesis; riboflavin biosynthesis; riboflavin from 2-hydroxy-3-oxobutyl phosphate and 5-amino-6-(D-ribitylamino)uracil: step 1/2. Functionally, catalyzes the formation of 6,7-dimethyl-8-ribityllumazine by condensation of 5-amino-6-(D-ribitylamino)uracil with 3,4-dihydroxy-2-butanone 4-phosphate. This is the penultimate step in the biosynthesis of riboflavin. The chain is 6,7-dimethyl-8-ribityllumazine synthase from Parasynechococcus marenigrum (strain WH8102).